Reading from the N-terminus, the 617-residue chain is Putative type VI secretion system protein VgrGA (617 aa).

Disordered stretches follow at residues G325–N344 and R449–S469.

The protein belongs to the VgrG protein family.

A Vgr protein that is probably part of a type VI secretion system (T6SS). May be required for export of proteins involved in Rhs-mediated cellular contact-dependent growth inhibition (CDI). The chain is Putative type VI secretion system protein VgrGA (vgrGA) from Dickeya dadantii (strain 3937) (Erwinia chrysanthemi (strain 3937)).